The sequence spans 130 residues: Histone H2B.2 (130 aa).

Basic and acidic residues predominate over residues 1–19; sequence MAPKAEKKPASKAPAEKKP. The tract at residues 1–38 is disordered; that stretch reads MAPKAEKKPASKAPAEKKPAAKKTASTDGAKKRTKARK. An N6-acetyllysine; alternate mark is found at Lys-7 and Lys-8. Residues Lys-7 and Lys-8 each participate in a glycyl lysine isopeptide (Lys-Gly) (interchain with G-Cter in SUMO); alternate cross-link. Position 11 is a phosphoserine (Ser-11). N6-acetyllysine is present on Lys-12. Position 17 is an N6-acetyllysine; alternate (Lys-17). Lys-17 is covalently cross-linked (Glycyl lysine isopeptide (Lys-Gly) (interchain with G-Cter in SUMO); alternate). Residue Lys-18 forms a Glycyl lysine isopeptide (Lys-Gly) (interchain with G-Cter in SUMO) linkage. Residue Lys-124 forms a Glycyl lysine isopeptide (Lys-Gly) (interchain with G-Cter in ubiquitin) linkage.

This sequence belongs to the histone H2B family. In terms of assembly, the nucleosome is a histone octamer containing two molecules each of H2A, H2B, H3 and H4 assembled in one H3-H4 heterotetramer and two H2A-H2B heterodimers. The octamer wraps approximately 147 bp of DNA. Monoubiquitinated by the UBC2-BRE1 complex to form H2BK123ub1. H2BK123ub1 gives a specific tag for epigenetic transcriptional activation and is also prerequisite for H3K4me and H3K79me formation. H2BK123ub1 also modulates the formation of double-strand breaks during meiosis and is a prerequisite for DNA-damage checkpoint activation. In terms of processing, phosphorylated by STE20 to form H2BS10ph during progression through meiotic prophase. May be correlated with chromosome condensation. Post-translationally, acetylated by GCN5 to form H2BK11ac and H2BK16ac. H2BK16ac can also be formed by ESA1. Acetylation of N-terminal lysines and particularly formation of H2BK11acK16ac has a positive effect on transcription. Sumoylation to form H2BK6su or H2BK7su, and probably also H2BK16su or H2BK17su, occurs preferentially near the telomeres and represses gene transcription.

Its subcellular location is the nucleus. It localises to the chromosome. Its function is as follows. Core component of nucleosome. Nucleosomes wrap and compact DNA into chromatin, limiting DNA accessibility to the cellular machineries which require DNA as a template. Histones thereby play a central role in transcription regulation, DNA repair, DNA replication and chromosomal stability. DNA accessibility is regulated via a complex set of post-translational modifications of histones, also called histone code, and nucleosome remodeling. The chain is Histone H2B.2 (HTB2) from Candida albicans (strain SC5314 / ATCC MYA-2876) (Yeast).